Consider the following 56-residue polypeptide: uncharacterized protein (56 aa).

This is an uncharacterized protein from Lepidoptera (butterflies and moths).